The sequence spans 278 residues: Large ribosomal subunit protein uL2 (278 aa).

Residues 218-278 form a disordered region; the sequence is RPHNRGVVMN…IMRSRHQRKK (61 aa).

This sequence belongs to the universal ribosomal protein uL2 family. In terms of assembly, part of the 50S ribosomal subunit. Forms a bridge to the 30S subunit in the 70S ribosome.

Functionally, one of the primary rRNA binding proteins. Required for association of the 30S and 50S subunits to form the 70S ribosome, for tRNA binding and peptide bond formation. It has been suggested to have peptidyltransferase activity; this is somewhat controversial. Makes several contacts with the 16S rRNA in the 70S ribosome. This chain is Large ribosomal subunit protein uL2, found in Rhizobium etli (strain CIAT 652).